A 215-amino-acid polypeptide reads, in one-letter code: CASP-like protein 1E1 (215 aa).

Over 1–51 (MESSRGKPGLNGSGGGAAAFDYSSRRGYYTGAGAALPPLAAGSRAPPVDPC) the chain is Cytoplasmic. The helical transmembrane segment at 52 to 72 (CVALRVFVLLGTLASAVVMAA) threads the bilayer. The Extracellular portion of the chain corresponds to 73–103 (DRQSTTVQIAAGEQLAPPLRVPVTAKWTYSS). Residues 104–124 (AFVYFVVANAMVFAFSAAALA) traverse the membrane as a helical segment. Residues 125–130 (AVRRRS) are Cytoplasmic-facing. A helical membrane pass occupies residues 131 to 151 (AVVPVMVGDLVAMALLFSAVG). Residues 152 to 185 (AAAQFGLLGERGNAHVRWAKVCDVYGPFCERAMA) are Extracellular-facing. The helical transmembrane segment at 186–206 (AVVVALIAAFADLVLLMLTIL) threads the bilayer. Topologically, residues 207–215 (TIHKASSYY) are cytoplasmic.

This sequence belongs to the Casparian strip membrane proteins (CASP) family. As to quaternary structure, homodimer and heterodimers.

Its subcellular location is the cell membrane. The sequence is that of CASP-like protein 1E1 from Oryza sativa subsp. indica (Rice).